The chain runs to 127 residues: Fluoride-specific ion channel FluC (127 aa).

4 helical membrane passes run 4–24, 35–55, 71–91, and 103–123; these read LLLAVFIGGGTGSVARWLLSM, LGTLAANLIGAFIIGMGFAWF, TGFCGGLTTFSTFSAEVVFLL, and VFVNLLGSFAMTALAFWLFSA. Gly75 and Thr78 together coordinate Na(+).

The protein belongs to the fluoride channel Fluc/FEX (TC 1.A.43) family.

Its subcellular location is the cell inner membrane. It catalyses the reaction fluoride(in) = fluoride(out). Its activity is regulated as follows. Na(+) is not transported, but it plays an essential structural role and its presence is essential for fluoride channel function. In terms of biological role, fluoride-specific ion channel. Important for reducing fluoride concentration in the cell, thus reducing its toxicity. The sequence is that of Fluoride-specific ion channel FluC from Escherichia coli O81 (strain ED1a).